We begin with the raw amino-acid sequence, 414 residues long: TBC domain-containing protein C1778.09 (414 aa).

The Rab-GAP TBC domain maps to 158-343 (GIPDCWRSIA…RIWDLLFLLG (186 aa)).

It is found in the cytoplasm. It localises to the nucleus. The sequence is that of TBC domain-containing protein C1778.09 from Schizosaccharomyces pombe (strain 972 / ATCC 24843) (Fission yeast).